A 247-amino-acid chain; its full sequence is MNTEIEVCIDNLESLYNALSGGANRIELCSSLALGGLTPSFGMMKQAAKISSVPVYAMIRPRQGDFIFDYDDILCMLEDIEACARAGVNGVVLGVLTPDGEIDMSAMQILSSKAHQLKLAITFHRAIDQLQDYKVPLEQIIELGCERILTSGLAINAEQGINVLADMVKQADGRIDIMAGAGVNATNAKMIQSTTQVPALHLSGKSTRPSLMESNSSAQMGSNDVDDYQIPVTDANKISNVRAALTA.

Over residues 205 to 222 (KSTRPSLMESNSSAQMGS) the composition is skewed to polar residues. The segment at 205-226 (KSTRPSLMESNSSAQMGSNDVD) is disordered.

It belongs to the CutC family.

Its subcellular location is the cytoplasm. In Vibrio atlanticus (strain LGP32) (Vibrio splendidus (strain Mel32)), this protein is PF03932 family protein CutC.